The sequence spans 29 residues: Cyclotide vibi-C (29 aa).

A cross-link (cyclopeptide (Gly-Asn)) is located at residues 1–29 (GLPVCGETCAFGSCYTPGCSCSWPVCTRN). Intrachain disulfides connect Cys5/Cys19, Cys9/Cys21, and Cys14/Cys26.

This is a cyclic peptide.

Its function is as follows. Probably participates in a plant defense mechanism. This chain is Cyclotide vibi-C, found in Viola biflora (Yellow wood violet).